We begin with the raw amino-acid sequence, 223 residues long: Ubiquitin-conjugating enzyme E2 S-A (223 aa).

The UBC core domain occupies 11-157 (HIIRLVYKEV…ARLLTEIHGG (147 aa)). Cys95 (glycyl thioester intermediate) is an active-site residue. Positions 170 to 223 (QDLASGASASSADPMIPGVLGGAEGPMAKKHAGERDKKLAAKKKLDKKRALRRL) are disordered. Over residues 209-223 (AAKKKLDKKRALRRL) the composition is skewed to basic residues.

It belongs to the ubiquitin-conjugating enzyme family.

It catalyses the reaction S-ubiquitinyl-[E1 ubiquitin-activating enzyme]-L-cysteine + [E2 ubiquitin-conjugating enzyme]-L-cysteine = [E1 ubiquitin-activating enzyme]-L-cysteine + S-ubiquitinyl-[E2 ubiquitin-conjugating enzyme]-L-cysteine.. It participates in protein modification; protein ubiquitination. Its function is as follows. Catalyzes the covalent attachment of ubiquitin to other proteins. Acts as an essential factor of the anaphase promoting complex/cyclosome (APC/C), a cell cycle-regulated ubiquitin ligase that controls progression through mitosis. Acts by specifically elongating 'Lys-11'-linked polyubiquitin chains initiated by the E2 enzyme ube2c/ubch10 on APC/C substrates, enhancing the degradation of APC/C substrates by the proteasome and promoting mitotic exit. This chain is Ubiquitin-conjugating enzyme E2 S-A (ube2s-a), found in Xenopus laevis (African clawed frog).